We begin with the raw amino-acid sequence, 227 residues long: Leucyl/phenylalanyl-tRNA--protein transferase (227 aa).

It belongs to the L/F-transferase family.

The protein localises to the cytoplasm. It carries out the reaction N-terminal L-lysyl-[protein] + L-leucyl-tRNA(Leu) = N-terminal L-leucyl-L-lysyl-[protein] + tRNA(Leu) + H(+). It catalyses the reaction N-terminal L-arginyl-[protein] + L-leucyl-tRNA(Leu) = N-terminal L-leucyl-L-arginyl-[protein] + tRNA(Leu) + H(+). The catalysed reaction is L-phenylalanyl-tRNA(Phe) + an N-terminal L-alpha-aminoacyl-[protein] = an N-terminal L-phenylalanyl-L-alpha-aminoacyl-[protein] + tRNA(Phe). In terms of biological role, functions in the N-end rule pathway of protein degradation where it conjugates Leu, Phe and, less efficiently, Met from aminoacyl-tRNAs to the N-termini of proteins containing an N-terminal arginine or lysine. In Desulfotalea psychrophila (strain LSv54 / DSM 12343), this protein is Leucyl/phenylalanyl-tRNA--protein transferase.